The primary structure comprises 236 residues: Urease accessory protein UreF (236 aa).

The protein belongs to the UreF family. UreD, UreF and UreG form a complex that acts as a GTP-hydrolysis-dependent molecular chaperone, activating the urease apoprotein by helping to assemble the nickel containing metallocenter of UreC. The UreE protein probably delivers the nickel.

The protein resides in the cytoplasm. Required for maturation of urease via the functional incorporation of the urease nickel metallocenter. The protein is Urease accessory protein UreF of Synechocystis sp. (strain ATCC 27184 / PCC 6803 / Kazusa).